The chain runs to 542 residues: MFS-type efflux pump MMF1 (542 aa).

Helical transmembrane passes span 24 to 44, 51 to 71, 98 to 118, 124 to 144, 151 to 171, 179 to 199, 215 to 235, and 248 to 268; these read WTIF…MTMI, IVAA…AFLL, VIFL…VLVV, GLGG…LTTL, FGLI…LGGV, WIFW…VLFL, LDLV…IAVT, and VWVP…VEWI. N285 carries N-linked (GlcNAc...) asparagine glycosylation. Transmembrane regions (helical) follow at residues 296 to 316, 326 to 346, 355 to 375, 384 to 404, 419 to 439, and 490 to 510; these read FLHG…FQAI, IWSF…GLLI, LIFI…HWSV, ISQI…LPPI, AYAF…TTIF, and ISDS…STFL.

Belongs to the major facilitator superfamily.

The protein localises to the cell membrane. In terms of biological role, glycosyltransferase; part of the gene cluster that mediates the biosynthesis of mannosylerythritol lipids (MELs), surface-active substances that enhance the availability of water-insoluble substrates. MMF1 is directly involved in the secretiopn of MALs. The polypeptide is MFS-type efflux pump MMF1 (Pseudozyma antarctica (strain T-34) (Yeast)).